Here is a 433-residue protein sequence, read N- to C-terminus: N-lysine methyltransferase SMYD2 (433 aa).

The SET domain occupies 7-241 (GGLERFCSPG…PGEEVFTSYI (235 aa)). 17–19 (KGR) serves as a coordination point for S-adenosyl-L-methionine. C52, C55, C65, C68, C74, C78, H86, and C90 together coordinate Zn(2+). The segment at 52 to 90 (CEFCFARKEGLSKCGRCKQAFYCNVECQKEDWPMHKLEC) adopts an MYND-type zinc-finger fold. S-adenosyl-L-methionine-binding positions include H137, 206 to 207 (NH), and 258 to 260 (YFF).

Belongs to the class V-like SAM-binding methyltransferase superfamily. Interacts with RNA polymerase II and HELZ. Interacts with SIN3A and HDAC1. Interacts (via MYND-type zinc finger) with EPB41L3. Interacts (via SET domain) with p53/TP53. Interacts with RB1 and HSP90AA1.

The protein resides in the cytoplasm. It localises to the cytosol. The protein localises to the nucleus. The enzyme catalyses L-lysyl(4)-[histone H3] + 3 S-adenosyl-L-methionine = N(6),N(6),N(6)-trimethyl-L-lysyl(4)-[histone H3] + 3 S-adenosyl-L-homocysteine + 3 H(+). It catalyses the reaction L-lysyl-[protein] + S-adenosyl-L-methionine = N(6)-methyl-L-lysyl-[protein] + S-adenosyl-L-homocysteine + H(+). Its function is as follows. Protein-lysine N-methyltransferase that methylates both histones and non-histone proteins, including p53/TP53 and RB1. Specifically trimethylates histone H3 'Lys-4' (H3K4me3) in vivo. The activity requires interaction with HSP90alpha. Shows even higher methyltransferase activity on p53/TP53. Monomethylates 'Lys-370' of p53/TP53, leading to decreased DNA-binding activity and subsequent transcriptional regulation activity of p53/TP53. Monomethylates RB1 at 'Lys-860'. The protein is N-lysine methyltransferase SMYD2 (SMYD2) of Sus scrofa (Pig).